Consider the following 388-residue polypeptide: Bifunctional enzyme IspD/IspF (388 aa).

The 2-C-methyl-D-erythritol 4-phosphate cytidylyltransferase stretch occupies residues 1–228 (MRIAALLLAA…GVIDRNLLPR (228 aa)). The interval 228-388 (RVGLGYDVHA…SIMVPDNGEA (161 aa)) is 2-C-methyl-D-erythritol 2,4-cyclodiphosphate synthase. Asp234 and His236 together coordinate a divalent metal cation. 4-CDP-2-C-methyl-D-erythritol 2-phosphate-binding positions include 234-236 (DVH) and 260-261 (HS). His268 is a binding site for a divalent metal cation. Residues 282–284 (DIG), 358–361 (TTSE), Phe365, and Arg368 each bind 4-CDP-2-C-methyl-D-erythritol 2-phosphate.

It in the N-terminal section; belongs to the IspD/TarI cytidylyltransferase family. IspD subfamily. This sequence in the C-terminal section; belongs to the IspF family. A divalent metal cation is required as a cofactor.

It catalyses the reaction 2-C-methyl-D-erythritol 4-phosphate + CTP + H(+) = 4-CDP-2-C-methyl-D-erythritol + diphosphate. The catalysed reaction is 4-CDP-2-C-methyl-D-erythritol 2-phosphate = 2-C-methyl-D-erythritol 2,4-cyclic diphosphate + CMP. Its pathway is isoprenoid biosynthesis; isopentenyl diphosphate biosynthesis via DXP pathway; isopentenyl diphosphate from 1-deoxy-D-xylulose 5-phosphate: step 2/6. It functions in the pathway isoprenoid biosynthesis; isopentenyl diphosphate biosynthesis via DXP pathway; isopentenyl diphosphate from 1-deoxy-D-xylulose 5-phosphate: step 4/6. In terms of biological role, bifunctional enzyme that catalyzes the formation of 4-diphosphocytidyl-2-C-methyl-D-erythritol from CTP and 2-C-methyl-D-erythritol 4-phosphate (MEP) (IspD), and catalyzes the conversion of 4-diphosphocytidyl-2-C-methyl-D-erythritol 2-phosphate (CDP-ME2P) to 2-C-methyl-D-erythritol 2,4-cyclodiphosphate (ME-CPP) with a corresponding release of cytidine 5-monophosphate (CMP) (IspF). The chain is Bifunctional enzyme IspD/IspF from Gluconobacter oxydans (strain 621H) (Gluconobacter suboxydans).